Here is a 4250-residue protein sequence, read N- to C-terminus: Dynein axonemal heavy chain 1 (4250 aa).

Residues 1–73 are disordered; that stretch reads MEECNKEGPS…KSPLTGTDKK (73 aa). Positions 1–1527 are stem; the sequence is MEECNKEGPS…YIRAVNAEFI (1527 aa). Positions 24-42 are enriched in basic and acidic residues; that stretch reads PESHDLEKILQESNYHPER. The segment covering 46–55 has biased composition (pro residues); sequence NPDPKTPPLP. 4 AAA regions span residues 1528 to 1749, 1809 to 2042, 2174 to 2434, and 2532 to 2784; these read YGYE…VISA, QAIR…NTVK, TMMP…VFQG, and DYNQ…LARH. The GPAGTGKT motif signature appears at 1566 to 1573; the sequence is GPAGTGKT. 1566-1573 is an ATP binding site; that stretch reads GPAGTGKT. The CFDEFNR motif signature appears at 1616–1622; the sequence is CFDEFNR. ATP-binding positions include 1847–1854, 2212–2219, and 2571–2578; these read GPTGSGKS, GPTGTGKT, and GVGGSGRS. The segment at 2799-3097 is stalk; the sequence is FSILIGQKKM…EELEMKCEQC (299 aa). The stretch at 3045-3128 forms a coiled coil; sequence LREAQDDLEV…QETVENLENM (84 aa). AAA regions lie at residues 3182-3412 and 3625-3844; these read LGNP…EIQA and MQDF…QLKM.

This sequence belongs to the dynein heavy chain family. In terms of assembly, consists of at least two heavy chains and a number of intermediate and light chains.

The protein resides in the cytoplasm. It localises to the cytoskeleton. The protein localises to the cilium axoneme. Its subcellular location is the cell projection. It is found in the cilium. The protein resides in the flagellum. Force generating protein of cilia required for sperm flagellum motility. Produces force towards the minus ends of microtubules. Dynein has ATPase activity; the force-producing power stroke is thought to occur on release of ADP. Required in spermatozoa for the formation of the inner dynein arms and biogenesis of the axoneme. This chain is Dynein axonemal heavy chain 1, found in Mus musculus (Mouse).